The sequence spans 366 residues: Putative neutrophil cytosol factor 1C (366 aa).

In terms of domain architecture, PX spans 1-101; sequence MYMFLVKWQD…DFFKVRPDDL (101 aa). SH3 domains are found at residues 132–191 and 202–261; these read IILQ…PLDS and YAGE…KSGQ. Residues 261–366 form a disordered region; the sequence is QDVSQAQRQI…STKRKLASAV (106 aa). 2 positions are modified to phosphoserine: Ser279 and Ser280. Basic residues predominate over residues 285-294; the sequence is HSIHQRSRKR. A phosphoserine mark is found at Ser296, Ser304, Ser321, and Ser324.

The protein localises to the cytoplasm. Functionally, may be required for activation of the latent NADPH oxidase (necessary for superoxide production). This Homo sapiens (Human) protein is Putative neutrophil cytosol factor 1C (NCF1C).